The chain runs to 631 residues: ATP-dependent zinc metalloprotease FtsH (631 aa).

The Cytoplasmic portion of the chain corresponds to 1–5 (MKKSN). Residues 6-26 (PWFVFFWITLLVIVLMFINFA) form a helical membrane-spanning segment. The Periplasmic portion of the chain corresponds to 27–102 (RQGGNEVELE…LEFSATEKSG (76 aa)). Residues 103-123 (WLGSLLLNWGPVVLLILFCFW) form a helical membrane-spanning segment. Over 124 to 631 (MMRGMSMGNK…KVINEKVIIS (508 aa)) the chain is Cytoplasmic. 196–203 (GSPGTGKT) lines the ATP pocket. Residue histidine 418 coordinates Zn(2+). The active site involves glutamate 419. Positions 422 and 494 each coordinate Zn(2+).

In the central section; belongs to the AAA ATPase family. This sequence in the C-terminal section; belongs to the peptidase M41 family. Homohexamer. The cofactor is Zn(2+).

The protein localises to the cell inner membrane. Functionally, acts as a processive, ATP-dependent zinc metallopeptidase for both cytoplasmic and membrane proteins. Plays a role in the quality control of integral membrane proteins. This chain is ATP-dependent zinc metalloprotease FtsH, found in Endomicrobium trichonymphae.